A 342-amino-acid chain; its full sequence is S-adenosylmethionine:tRNA ribosyltransferase-isomerase (342 aa).

This sequence belongs to the QueA family. Monomer.

The protein localises to the cytoplasm. The enzyme catalyses 7-aminomethyl-7-carbaguanosine(34) in tRNA + S-adenosyl-L-methionine = epoxyqueuosine(34) in tRNA + adenine + L-methionine + 2 H(+). It participates in tRNA modification; tRNA-queuosine biosynthesis. Functionally, transfers and isomerizes the ribose moiety from AdoMet to the 7-aminomethyl group of 7-deazaguanine (preQ1-tRNA) to give epoxyqueuosine (oQ-tRNA). This Streptococcus sanguinis (strain SK36) protein is S-adenosylmethionine:tRNA ribosyltransferase-isomerase.